The chain runs to 759 residues: DNA topoisomerase 4 subunit A (759 aa).

The Topo IIA-type catalytic domain maps to 44–516; sequence LPDVRDGLKP…VFGEAPQVDA (473 aa). The active-site O-(5'-phospho-DNA)-tyrosine intermediate is the Y132.

It belongs to the type II topoisomerase GyrA/ParC subunit family. ParC type 1 subfamily. In terms of assembly, heterotetramer composed of ParC and ParE.

The protein localises to the cell membrane. It carries out the reaction ATP-dependent breakage, passage and rejoining of double-stranded DNA.. Topoisomerase IV is essential for chromosome segregation. It relaxes supercoiled DNA. Performs the decatenation events required during the replication of a circular DNA molecule. The chain is DNA topoisomerase 4 subunit A from Caulobacter vibrioides (strain ATCC 19089 / CIP 103742 / CB 15) (Caulobacter crescentus).